The following is an 804-amino-acid chain: Phenylalanine--tRNA ligase beta subunit (804 aa).

The 117-residue stretch at 39–155 folds into the tRNA-binding domain; that stretch reads AEGLKKIVVG…ADVKPGEEVY (117 aa). The B5 domain occupies 408-483; the sequence is RNPSVVKTTV…RIYGYDNLKS (76 aa). Mg(2+) is bound by residues D461, D467, E470, and E471. One can recognise an FDX-ACB domain in the interval 711-804; that stretch reads PKFPAIERDL…LKESLKIKVR (94 aa).

Belongs to the phenylalanyl-tRNA synthetase beta subunit family. Type 1 subfamily. In terms of assembly, tetramer of two alpha and two beta subunits. Mg(2+) serves as cofactor.

It is found in the cytoplasm. The enzyme catalyses tRNA(Phe) + L-phenylalanine + ATP = L-phenylalanyl-tRNA(Phe) + AMP + diphosphate + H(+). The chain is Phenylalanine--tRNA ligase beta subunit from Lactobacillus johnsonii (strain CNCM I-12250 / La1 / NCC 533).